Consider the following 206-residue polypeptide: uncharacterized protein (206 aa).

Positions 29 to 169 (YWHSTFHCWV…DGVFAEGFIV (141 aa)) constitute a Nudix hydrolase domain. A Nudix box motif is present at residues 69 to 90 (AGHIKSGESIEDGVRELKEELG). E84 and E88 together coordinate Mg(2+).

Belongs to the Nudix hydrolase family. Mg(2+) is required as a cofactor.

This is an uncharacterized protein from Clostridium acetobutylicum (strain ATCC 824 / DSM 792 / JCM 1419 / IAM 19013 / LMG 5710 / NBRC 13948 / NRRL B-527 / VKM B-1787 / 2291 / W).